The sequence spans 260 residues: Small ribosomal subunit protein uS2 (260 aa).

The tract at residues 224–260 (GRQGQDAGEDSAEKTFADTADGEGDFEESSNNENQEA) is disordered. Acidic residues predominate over residues 243 to 260 (ADGEGDFEESSNNENQEA).

The protein belongs to the universal ribosomal protein uS2 family.

The protein is Small ribosomal subunit protein uS2 of Oenococcus oeni (strain ATCC BAA-331 / PSU-1).